The following is a 423-amino-acid chain: UDP-N-acetylglucosamine 1-carboxyvinyltransferase (423 aa).

22–23 (KN) provides a ligand contact to phosphoenolpyruvate. Position 93 (Arg-93) interacts with UDP-N-acetyl-alpha-D-glucosamine. The active-site Proton donor is the Cys-117. Cys-117 is subject to 2-(S-cysteinyl)pyruvic acid O-phosphothioketal. Residues 122-126 (RPVDL), Asp-308, and Val-330 each bind UDP-N-acetyl-alpha-D-glucosamine.

This sequence belongs to the EPSP synthase family. MurA subfamily.

The protein localises to the cytoplasm. It catalyses the reaction phosphoenolpyruvate + UDP-N-acetyl-alpha-D-glucosamine = UDP-N-acetyl-3-O-(1-carboxyvinyl)-alpha-D-glucosamine + phosphate. It participates in cell wall biogenesis; peptidoglycan biosynthesis. Functionally, cell wall formation. Adds enolpyruvyl to UDP-N-acetylglucosamine. The sequence is that of UDP-N-acetylglucosamine 1-carboxyvinyltransferase from Finegoldia magna (strain ATCC 29328 / DSM 20472 / WAL 2508) (Peptostreptococcus magnus).